We begin with the raw amino-acid sequence, 188 residues long: Protein-L-isoaspartate O-methyltransferase (188 aa).

The active site involves Ser-33.

The protein belongs to the methyltransferase superfamily. L-isoaspartyl/D-aspartyl protein methyltransferase family.

The protein localises to the cytoplasm. The catalysed reaction is [protein]-L-isoaspartate + S-adenosyl-L-methionine = [protein]-L-isoaspartate alpha-methyl ester + S-adenosyl-L-homocysteine. Its function is as follows. Catalyzes the methyl esterification of L-isoaspartyl residues in peptides and proteins that result from spontaneous decomposition of normal L-aspartyl and L-asparaginyl residues. It plays a role in the repair and/or degradation of damaged proteins. The sequence is that of Protein-L-isoaspartate O-methyltransferase from Methanocella arvoryzae (strain DSM 22066 / NBRC 105507 / MRE50).